The sequence spans 314 residues: tRNA dimethylallyltransferase (314 aa).

Residue 14 to 21 participates in ATP binding; the sequence is GPTASGKT. 16-21 contacts substrate; the sequence is TASGKT. Interaction with substrate tRNA stretches follow at residues 39-42, 163-167, and 245-250; these read DSAQ, QRLQR, and RCVGYR.

It belongs to the IPP transferase family. As to quaternary structure, monomer. The cofactor is Mg(2+).

It carries out the reaction adenosine(37) in tRNA + dimethylallyl diphosphate = N(6)-dimethylallyladenosine(37) in tRNA + diphosphate. Catalyzes the transfer of a dimethylallyl group onto the adenine at position 37 in tRNAs that read codons beginning with uridine, leading to the formation of N6-(dimethylallyl)adenosine (i(6)A). In Dechloromonas aromatica (strain RCB), this protein is tRNA dimethylallyltransferase.